We begin with the raw amino-acid sequence, 728 residues long: Ophiobolin F synthase oblA (728 aa).

The segment at 1–322 (MEYKYSTIVD…RYHFPGRWNE (322 aa)) is (7Z)-ophiobola-7,19-dien-3-ol synthase. Mg(2+) is bound by residues Asp-93 and Asp-97. Residue Asp-93 participates in substrate binding. Positions 93–97 (DDEID) match the DDXXD 1 motif. Residues 182–185 (RCMD), Asn-226, 230–234 (SYEKE), and 313–314 (RY) contribute to the substrate site. The short motif at 226-234 (NDLFSYEKE) is the NSE/DTE element. The tract at residues 323–728 (LQKLRAEHGI…LRLMVDMLKV (406 aa)) is geranylfarnesyl diphosphate synthase. Residues 362–371 (GINGTNGVNG) show a composition bias toward low complexity. The tract at residues 362–394 (GINGTNGVNGKRNRDEDGDENDARINGNGFKKP) is disordered. Positions 439, 442, and 471 each coordinate isopentenyl diphosphate. Mg(2+)-binding residues include Asp-478 and Asp-482. A DDXXD 2 motif is present at residues 478 to 482 (DDIED). Arg-487 serves as a coordination point for dimethylallyl diphosphate. An isopentenyl diphosphate-binding site is contributed by Arg-488. Dimethylallyl diphosphate is bound by residues Lys-565, Thr-566, Gln-604, Asn-611, Lys-621, and Lys-631.

This sequence in the N-terminal section; belongs to the terpene synthase family. In the C-terminal section; belongs to the FPP/GGPP synthase family. Requires Mg(2+) as cofactor.

The enzyme catalyses isopentenyl diphosphate + (2E,6E)-farnesyl diphosphate = (2E,6E,10E)-geranylgeranyl diphosphate + diphosphate. It carries out the reaction isopentenyl diphosphate + (2E,6E,10E)-geranylgeranyl diphosphate = (2E,6E,10E,14E)-geranylfarnesyl diphosphate + diphosphate. It catalyses the reaction (2E,6E,10E,14E)-geranylfarnesyl diphosphate + H2O = ophiobolin F + diphosphate. It participates in secondary metabolite biosynthesis; terpenoid biosynthesis. In terms of biological role, bifunctional sesterterpene synthase; part of the gene cluster that mediates the biosynthesis of the sesterterpenes ophiobolins, fungal phytotoxins with potential anti-cancer activities. The first step of the pathway is performed by the sesterterpene synthase oblA that possesses both prenyl transferase and terpene cyclase activity, converting isopentenyl diphosphate and dimethylallyl diphosphate into geranylfarnesyl diphosphate (GFPP) and further converting GFPP into ophiobolin F, respectively. Other sesterterpenoids (C(25) terpenoids) are found as minor products of oblA. The cytochrome P450 monooxygenase oblB then catalyzes a four-step oxidative transformation of ophiobolin F to yield ophiobolin C. The function of the cytochrome P450 monooxygenase oblE has still to be determined. This is Ophiobolin F synthase oblA from Emericella variicolor (Aspergillus stellatus).